The primary structure comprises 434 residues: Putative DD-carboxypeptidase TP_0574 (434 aa).

Positions Met-1 to Gly-19 are cleaved as a signal peptide. Residue Cys-20 is the site of N-palmitoyl cysteine attachment. Residue Cys-20 is the site of S-diacylglycerol cysteine attachment.

As to quaternary structure, probably a monomer; a non-lipidated construct (residues 22-434) is monomeric in solution but crystallizes as a homodimer. Requires Zn(2+) as cofactor. In terms of processing, the N-terminus is blocked. Present as a doublet of low abundance 48 kDa and high abundance 47 kDa proteins. The longer form is probably due to readthrough of the stop codon; the extra amino acids at the C-terminus would be X-Lys-Arg-Gly-Val-Leu-Ser-Arg-Val-Ser, a peptide antibody against this sequence detects only the 48 kDa form.

The protein localises to the cell inner membrane. A possible D,D-carboxypeptidase, that releases amino acids sequentially from a proteins C-terminus. Has zinc-dependent carboxypeptidase activity on synthetic depsipeptide substrates. May serve to decrease cross-linking of peptidoglycan, promoting the highly sinusous motility of this spirochaete. Overexpression of the whole protein in E.coli leads to aberrant cell morphology and extrusion of the cytoplasm, while overexpression of a construct with the first 62 resides of the protein fused to PhoA does have this effect, suggesting the whole protein, not the lipoprotein moiety, is toxic. Binds penicillin. Penicillin binding is covalent, does not require lipidation, and is zinc-dependent. While this protein has beta-lactamase activity in vitro, that is probably not its role in vivo, as T.pallidum is very sensitive to penicillin antibiotics. Its function is as follows. A pathogen-specific membrane antigen. Most abundant of the membrane lipoproteins, only found in pathogenic treponemes, suggesting that it is an important structural moiety in the cell envelope of virulent treponemal subspecies. A lipopeptide corresponding to the first 6 mature residues induces host (human and mouse) cytokine release by monocyte cell lines via TLR2 and CD14; nonlipidated protein does not stimulate host cells. Stimulates host (human) dendritic cell maturation to become MHC class II-positive antigen presenting cells via TLR2, which depends on lipidation; nonlipidated protein does not stimulate maturation. The protein is Putative DD-carboxypeptidase TP_0574 of Treponema pallidum (strain Nichols).